Reading from the N-terminus, the 415-residue chain is MSDLQGRKIFKVFNQDFIVDERYTVTKELGQGAYGIVCAAVNNQTSEGVAIKKVTNVFSKKILAKRALREIKLLQHFRGHRNITCLYDMDIPRPDNFNETYLYEELMECDLAAIIRSGQPLTDAHFQSFIYQILCGLKYIHSANVLHRDLKPGNLLVNADCELKICDFGLARGFSVDPEENAGYMTEYVATRWYRAPEIMLSFQSYTKAIDVWSVGCILAELLGGRPFFKGRDYVDQLNQILHILGTPNEETLSRIGSPRAQEYVRNLPFMAKKPFPTLFPNANPDALDLLDRMLAFDPSSRISVEQALEHPYLHIWHDASDEPDCPTTFNFDFEVVEDVGEMRKMILDEVYRFRQLVRTAPGAGGHGAPHAPQVPIPAGAGQGQWKAEDPRPQEYVGQMNDLEAELAGGLDQRR.

Residues Y23 to L314 enclose the Protein kinase domain. ATP-binding positions include L29–V37 and K52. The disordered stretch occupies residues G363–Q394.

Belongs to the protein kinase superfamily. Ser/Thr protein kinase family. MAP kinase subfamily. In terms of assembly, interacts with transcription factor MIG1. Interacts with transcription factor SWI6. The cofactor is Mg(2+).

It carries out the reaction L-seryl-[protein] + ATP = O-phospho-L-seryl-[protein] + ADP + H(+). The catalysed reaction is L-threonyl-[protein] + ATP = O-phospho-L-threonyl-[protein] + ADP + H(+). Functionally, mitogen-activated protein kinase; part of the MCK1-MKK2-MPS1 MAP kinase (MAPK) signal transduction cascade that is essential for cell wall integrity and plant infection, but not for plant defense responses. Beside its role in pathogenesis, the MPS1 cascade is active in conidiation and cellular stress responses. Targets downstream of the MPS1-MAPK pathway include transcription factors MIG1 and SWI6, as well as GSK1 and MPG1. The polypeptide is Mitogen-activated protein kinase MPS1 (Pyricularia oryzae (strain 70-15 / ATCC MYA-4617 / FGSC 8958) (Rice blast fungus)).